Reading from the N-terminus, the 177-residue chain is Secretion monitor (177 aa).

An N-terminal signal peptide occupies residues 1–37; the sequence is MIGILNRWRQFGRRYFWPHLLLGMVAASLGVPSNLSG.

Belongs to the SecM family.

It is found in the cytoplasm. It localises to the cytosol. Its subcellular location is the periplasm. In terms of biological role, regulates secA expression by translational coupling of the secM secA operon. Translational pausing at a specific Pro residue 5 residues before the end of the protein may allow disruption of a mRNA repressor helix that normally suppresses secA translation initiation. The sequence is that of Secretion monitor from Yersinia pseudotuberculosis serotype O:1b (strain IP 31758).